The chain runs to 214 residues: Response regulator GacA (214 aa).

The Response regulatory domain occupies 3–119; sequence KVLVVDDHDL…EMVQAIRLVF (117 aa). Asp-54 carries the 4-aspartylphosphate modification. In terms of domain architecture, HTH luxR-type spans 143 to 208; the sequence is NNSPFDLLSE…ELALLAVRHG (66 aa). The segment at residues 167–186 is a DNA-binding region (H-T-H motif); it reads VQTISDKLCLSPKTVNTYRY.

In terms of processing, phosphorylated by LemA.

Functionally, forms part of a two-component regulatory system GacA/GacA(LemA). May be involved in lesion formation, swarming and in the production of extracellular protease, syringomycin and N-acyl-L-homoserine lactone (acyl-HSL). This chain is Response regulator GacA (gacA), found in Pseudomonas syringae pv. syringae (strain B728a).